The sequence spans 291 residues: Elongation factor Ts (291 aa).

Positions 81-84 (TDFV) are involved in Mg(2+) ion dislocation from EF-Tu. The tract at residues 271–291 (EGKEKKDESFADEVMAQVRDS) is disordered.

Belongs to the EF-Ts family.

It localises to the cytoplasm. In terms of biological role, associates with the EF-Tu.GDP complex and induces the exchange of GDP to GTP. It remains bound to the aminoacyl-tRNA.EF-Tu.GTP complex up to the GTP hydrolysis stage on the ribosome. The chain is Elongation factor Ts from Halorhodospira halophila (strain DSM 244 / SL1) (Ectothiorhodospira halophila (strain DSM 244 / SL1)).